Consider the following 1080-residue polypeptide: Kinesin-like protein KIN-14E (1080 aa).

Residues methionine 1 to alanine 35 are disordered. Residues glutamine 247 to glutamate 355 adopt a coiled-coil conformation. In terms of domain architecture, Kinesin motor spans asparagine 407–isoleucine 729. Residue glycine 490–threonine 497 participates in ATP binding. The stretch at lysine 736 to lysine 893 forms a coiled coil. Residues alanine 960–arginine 970 are compositionally biased toward basic and acidic residues. The disordered stretch occupies residues alanine 960–arginine 1080. A compositionally biased stretch (polar residues) spans serine 971 to isoleucine 985. The span at threonine 1047 to threonine 1059 shows a compositional bias: low complexity.

It belongs to the TRAFAC class myosin-kinesin ATPase superfamily. Kinesin family. KIN-14 subfamily.

This chain is Kinesin-like protein KIN-14E, found in Oryza sativa subsp. japonica (Rice).